Consider the following 106-residue polypeptide: Large ribosomal subunit protein P1A (106 aa).

Ser2 carries the post-translational modification N-acetylserine. A disordered region spans residues 73-106; that stretch reads GGVAGGEAGEAEAEKEEEEAKEESDDDMGFGLFD. Residues 81-100 are compositionally biased toward acidic residues; sequence GEAEAEKEEEEAKEESDDDM. Phosphoserine is present on Ser96.

The protein belongs to the eukaryotic ribosomal protein P1/P2 family. Component of the large ribosomal subunit (LSU). Mature yeast ribosomes consist of a small (40S) and a large (60S) subunit. The 40S small subunit contains 1 molecule of ribosomal RNA (18S rRNA) and 33 different proteins (encoded by 57 genes). The large 60S subunit contains 3 rRNA molecules (25S, 5.8S and 5S rRNA) and 46 different proteins (encoded by 81 genes). The 5 acidic ribosomal P-proteins form the stalk structure of the 60S subunit. They are organized as a pentameric complex in which uL10/P0 interacts with 2 heterodimers, P1A-P2B and P1B-P2A. N-terminally acetylated by acetyltransferase NatA.

It localises to the cytoplasm. Its function is as follows. Component of the ribosome, a large ribonucleoprotein complex responsible for the synthesis of proteins in the cell. The small ribosomal subunit (SSU) binds messenger RNAs (mRNAs) and translates the encoded message by selecting cognate aminoacyl-transfer RNA (tRNA) molecules. The large subunit (LSU) contains the ribosomal catalytic site termed the peptidyl transferase center (PTC), which catalyzes the formation of peptide bonds, thereby polymerizing the amino acids delivered by tRNAs into a polypeptide chain. The nascent polypeptides leave the ribosome through a tunnel in the LSU and interact with protein factors that function in enzymatic processing, targeting, and the membrane insertion of nascent chains at the exit of the ribosomal tunnel. The chain is Large ribosomal subunit protein P1A from Saccharomyces cerevisiae (strain ATCC 204508 / S288c) (Baker's yeast).